The chain runs to 185 residues: Superoxide dismutase [Cu-Zn] (185 aa).

A signal peptide spans 1–18 (MTAFYKLCGMSMLSLVLA). Histidine 85, histidine 87, and histidine 102 together coordinate Cu cation. Residues cysteine 92 and cysteine 180 are joined by a disulfide bond. 4 residues coordinate Zn(2+): histidine 102, histidine 111, histidine 120, and aspartate 123. A Cu cation-binding site is contributed by histidine 158.

Belongs to the Cu-Zn superoxide dismutase family. Homodimer. The cofactor is Cu cation. Zn(2+) serves as cofactor.

The protein localises to the periplasm. It catalyses the reaction 2 superoxide + 2 H(+) = H2O2 + O2. Destroys radicals which are normally produced within the cells and which are toxic to biological systems. The sequence is that of Superoxide dismutase [Cu-Zn] (sodC) from Francisella tularensis subsp. holarctica (strain LVS).